A 272-amino-acid polypeptide reads, in one-letter code: Energy-coupling factor transporter ATP-binding protein EcfA1 (272 aa).

The region spanning 2-237 (IKVSDVCFSY…KNIIEKAKID (236 aa)) is the ABC transporter domain. 37–44 (GHNGSGKS) contributes to the ATP binding site.

The protein belongs to the ABC transporter superfamily. Energy-coupling factor EcfA family. Forms a stable energy-coupling factor (ECF) transporter complex composed of 2 membrane-embedded substrate-binding proteins (S component), 2 ATP-binding proteins (A component) and 2 transmembrane proteins (T component).

The protein localises to the cell membrane. ATP-binding (A) component of a common energy-coupling factor (ECF) ABC-transporter complex. Unlike classic ABC transporters this ECF transporter provides the energy necessary to transport a number of different substrates. The polypeptide is Energy-coupling factor transporter ATP-binding protein EcfA1 (Mesomycoplasma hyopneumoniae (strain 7448) (Mycoplasma hyopneumoniae)).